The sequence spans 413 residues: Serine/threonine-protein kinase SSN3 (413 aa).

Residues 26–355 (YHIVGFISSG…AQEALEHPYF (330 aa)) form the Protein kinase domain. ATP is bound by residues 32-40 (ISSGTYGRV) and Lys56. Asp158 functions as the Proton acceptor in the catalytic mechanism. Basic and acidic residues predominate over residues 376 to 385 (RRVTQDDNDI). The interval 376-413 (RRVTQDDNDIRSGSLPGTKRSGLPDDSLMGRASKRLKE) is disordered.

The protein belongs to the protein kinase superfamily. CMGC Ser/Thr protein kinase family. CDC2/CDKX subfamily. In terms of assembly, component of the srb8-11 complex, a regulatory module of the Mediator complex. It depends on Mg(2+) as a cofactor.

The protein resides in the nucleus. The enzyme catalyses L-seryl-[protein] + ATP = O-phospho-L-seryl-[protein] + ADP + H(+). It carries out the reaction L-threonyl-[protein] + ATP = O-phospho-L-threonyl-[protein] + ADP + H(+). It catalyses the reaction [DNA-directed RNA polymerase] + ATP = phospho-[DNA-directed RNA polymerase] + ADP + H(+). In terms of biological role, component of the srb8-11 complex. The srb8-11 complex is a regulatory module of the Mediator complex which is itself involved in regulation of basal and activated RNA polymerase II-dependent transcription. The srb8-11 complex may be involved in the transcriptional repression of a subset of genes regulated by Mediator. It may inhibit the association of the Mediator complex with RNA polymerase II to form the holoenzyme complex. The srb8-11 complex phosphorylates the C-terminal domain (CTD) of the largest subunit of RNA polymerase II. The polypeptide is Serine/threonine-protein kinase SSN3 (ssn3) (Aspergillus oryzae (strain ATCC 42149 / RIB 40) (Yellow koji mold)).